We begin with the raw amino-acid sequence, 476 residues long: Ribulose bisphosphate carboxylase large chain (476 aa).

Residues asparagine 124 and threonine 174 each coordinate substrate. Catalysis depends on lysine 176, which acts as the Proton acceptor. Lysine 178 contacts substrate. Mg(2+) contacts are provided by lysine 202, aspartate 204, and glutamate 205. Position 202 is an N6-carboxylysine (lysine 202). The active-site Proton acceptor is histidine 295. Substrate-binding residues include arginine 296, histidine 328, and serine 380.

Belongs to the RuBisCO large chain family. Type I subfamily. Heterohexadecamer of 8 large chains and 8 small chains; disulfide-linked. The disulfide link is formed within the large subunit homodimers. Forms complexes of many stoichiometries with Raf1 with and without RbcS. RuBisCO interacts with the C-terminus of CcmM. Requires Mg(2+) as cofactor. Post-translationally, the disulfide bond which can form in the large chain dimeric partners within the hexadecamer appears to be associated with oxidative stress and protein turnover.

It is found in the carboxysome. The enzyme catalyses 2 (2R)-3-phosphoglycerate + 2 H(+) = D-ribulose 1,5-bisphosphate + CO2 + H2O. It carries out the reaction D-ribulose 1,5-bisphosphate + O2 = 2-phosphoglycolate + (2R)-3-phosphoglycerate + 2 H(+). In terms of biological role, ruBisCO catalyzes two reactions: the carboxylation of D-ribulose 1,5-bisphosphate, the primary event in carbon dioxide fixation, as well as the oxidative fragmentation of the pentose substrate in the photorespiration process. Both reactions occur simultaneously and in competition at the same active site. The sequence is that of Ribulose bisphosphate carboxylase large chain from Nostoc sp. (strain PCC 7120 / SAG 25.82 / UTEX 2576).